Here is a 664-residue protein sequence, read N- to C-terminus: L-type lectin-domain containing receptor kinase I.3 (664 aa).

Residues 1-21 (MACRLYLALIFSCVYLICLSS) form the signal peptide. At 22–286 (QQETGFVYNG…PKEEKKKLSP (265 aa)) the chain is on the extracellular side. Residues 24-257 (ETGFVYNGFE…NHYILGWSFS (234 aa)) form a legume-lectin like region. Asn55, Asn125, Asn128, Asn181, Asn204, Asn225, and Asn267 each carry an N-linked (GlcNAc...) asparagine glycan. Residues 287–307 (LLIGLVILLVIPVVMVLGGVY) form a helical membrane-spanning segment. At 308–664 (WYRRKKYAEV…THTILDGHGR (357 aa)) the chain is on the cytoplasmic side. The Protein kinase domain maps to 342-619 (FRKDCRVGKG…LNQDLPLPIF (278 aa)). ATP is bound by residues 348–356 (VGKGGFGEV) and Lys370. Asp466 (proton acceptor) is an active-site residue.

In the C-terminal section; belongs to the protein kinase superfamily. Ser/Thr protein kinase family. It in the N-terminal section; belongs to the leguminous lectin family. Autophosphorylated on Ser and Thr residues. As to expression, mostly expressed in roots and flowers, and, to a lower extent, in leaves.

It localises to the cell membrane. It carries out the reaction L-seryl-[protein] + ATP = O-phospho-L-seryl-[protein] + ADP + H(+). It catalyses the reaction L-threonyl-[protein] + ATP = O-phospho-L-threonyl-[protein] + ADP + H(+). Its function is as follows. Involved in resistance response to the pathogenic fungus Alternaria brassicicola. The sequence is that of L-type lectin-domain containing receptor kinase I.3 from Arabidopsis thaliana (Mouse-ear cress).